A 315-amino-acid chain; its full sequence is Ribosomal RNA small subunit methyltransferase H (315 aa).

S-adenosyl-L-methionine contacts are provided by residues 33–35 (GGH), D52, F84, D106, and Q113. Positions 294–315 (SSDELEENNRSHSAKLRVAEKL) are disordered.

It belongs to the methyltransferase superfamily. RsmH family.

It is found in the cytoplasm. The catalysed reaction is cytidine(1402) in 16S rRNA + S-adenosyl-L-methionine = N(4)-methylcytidine(1402) in 16S rRNA + S-adenosyl-L-homocysteine + H(+). Specifically methylates the N4 position of cytidine in position 1402 (C1402) of 16S rRNA. The chain is Ribosomal RNA small subunit methyltransferase H from Lactobacillus johnsonii (strain CNCM I-12250 / La1 / NCC 533).